An 807-amino-acid polypeptide reads, in one-letter code: Ribosome-releasing factor 2, mitochondrial (807 aa).

The transit peptide at 1–18 directs the protein to the mitochondrion; it reads MFCRKYAFQTWKQFSRFY. The tr-type G domain maps to 27–315; sequence SKTRNIGIIA…GITKYLPSPL (289 aa). GTP contacts are provided by residues 36–43, 100–104, and 154–157; these read AHIDAGKT, DTPGH, and NKMD.

Belongs to the TRAFAC class translation factor GTPase superfamily. Classic translation factor GTPase family. EF-G/EF-2 subfamily.

It is found in the mitochondrion. Functionally, mitochondrial GTPase that mediates the disassembly of ribosomes from messenger RNA at the termination of mitochondrial protein biosynthesis. Not involved in the GTP-dependent ribosomal translocation step during translation elongation. The polypeptide is Ribosome-releasing factor 2, mitochondrial (Candida dubliniensis (strain CD36 / ATCC MYA-646 / CBS 7987 / NCPF 3949 / NRRL Y-17841) (Yeast)).